A 417-amino-acid chain; its full sequence is Imidazolonepropionase (417 aa).

Fe(3+) contacts are provided by H77 and H79. Zn(2+) contacts are provided by H77 and H79. 4-imidazolone-5-propanoate contacts are provided by R86, Y149, and H182. Y149 is a binding site for N-formimidoyl-L-glutamate. H247 serves as a coordination point for Fe(3+). H247 lines the Zn(2+) pocket. Q250 serves as a coordination point for 4-imidazolone-5-propanoate. D322 lines the Fe(3+) pocket. Residue D322 coordinates Zn(2+). 2 residues coordinate N-formimidoyl-L-glutamate: N324 and G326. T327 contacts 4-imidazolone-5-propanoate.

Belongs to the metallo-dependent hydrolases superfamily. HutI family. Zn(2+) is required as a cofactor. Requires Fe(3+) as cofactor.

It localises to the cytoplasm. It catalyses the reaction 4-imidazolone-5-propanoate + H2O = N-formimidoyl-L-glutamate. Its pathway is amino-acid degradation; L-histidine degradation into L-glutamate; N-formimidoyl-L-glutamate from L-histidine: step 3/3. Catalyzes the hydrolytic cleavage of the carbon-nitrogen bond in imidazolone-5-propanoate to yield N-formimidoyl-L-glutamate. It is the third step in the universal histidine degradation pathway. This is Imidazolonepropionase from Cupriavidus taiwanensis (strain DSM 17343 / BCRC 17206 / CCUG 44338 / CIP 107171 / LMG 19424 / R1) (Ralstonia taiwanensis (strain LMG 19424)).